A 341-amino-acid chain; its full sequence is N-acetyl-gamma-glutamyl-phosphate reductase (341 aa).

Residue cysteine 147 is part of the active site.

Belongs to the NAGSA dehydrogenase family. Type 1 subfamily.

Its subcellular location is the cytoplasm. It catalyses the reaction N-acetyl-L-glutamate 5-semialdehyde + phosphate + NADP(+) = N-acetyl-L-glutamyl 5-phosphate + NADPH + H(+). The protein operates within amino-acid biosynthesis; L-arginine biosynthesis; N(2)-acetyl-L-ornithine from L-glutamate: step 3/4. Its function is as follows. Catalyzes the NADPH-dependent reduction of N-acetyl-5-glutamyl phosphate to yield N-acetyl-L-glutamate 5-semialdehyde. This is N-acetyl-gamma-glutamyl-phosphate reductase from Dehalococcoides mccartyi (strain ATCC BAA-2266 / KCTC 15142 / 195) (Dehalococcoides ethenogenes (strain 195)).